The following is a 156-amino-acid chain: Large ribosomal subunit protein uL30 (156 aa).

The protein belongs to the universal ribosomal protein uL30 family. As to quaternary structure, part of the 50S ribosomal subunit.

In Sulfolobus acidocaldarius (strain ATCC 33909 / DSM 639 / JCM 8929 / NBRC 15157 / NCIMB 11770), this protein is Large ribosomal subunit protein uL30.